The sequence spans 79 residues: Cyclin-dependent kinases regulatory subunit 2 (79 aa).

The protein belongs to the CKS family. Forms a homohexamer that can probably bind six kinase subunits.

Binds to the catalytic subunit of the cyclin dependent kinases and is essential for their biological function. In Xenopus laevis (African clawed frog), this protein is Cyclin-dependent kinases regulatory subunit 2 (cks2).